Reading from the N-terminus, the 515-residue chain is Pre-glycoprotein polyprotein GP complex (515 aa).

Gly2 carries N-myristoyl glycine; by host lipidation. Residues 2-17 lie on the Extracellular side of the membrane; it reads GQVIGFFQSLPEIINE. The chain crosses the membrane as a helical span at residues 18–33; the sequence is ALNIALICVALLATIK. Over 34 to 58 the chain is Cytoplasmic; it reads GMVNIWKSGLIQLLFFLTLAGRSCS. Residue Cys57 coordinates Zn(2+). Topologically, residues 59-453 are extracellular; sequence HSFTIGRFHE…QGRTPLSLVD (395 aa). 4 cysteine pairs are disulfide-bonded: Cys87/Cys255, Cys300/Cys313, Cys322/Cys331, and Cys385/Cys406. 5 N-linked (GlcNAc...) asparagine; by host glycosylation sites follow: Asn90, Asn112, Asn127, Asn180, and Asn248. Asn386, Asn394, and Asn416 each carry an N-linked (GlcNAc...) asparagine; by host glycan. A helical membrane pass occupies residues 454-474; the sequence is LCFWSTLFYISTLFAHLVGFP. Residues 475–515 are Cytoplasmic-facing; sequence THRHLIGEGCPKPHRLTGSGICSCGHYGIPGKPVRWTKMSR. The Zn(2+) site is built by His476, His478, Cys484, His488, Cys496, and Cys498.

It belongs to the arenaviridae GPC protein family. Interacts with glycoprotein G2. Part of the GP complex (GP-C) together with glycoprotein G1 and glycoprotein G2. The GP-complex interacts with protein Z, which interacts with ribonucleocapsid; these interactions may induce virion budding. As to quaternary structure, homotrimer; disulfide-linked. In pre-fusion state, G1 homotrimers bind G2 homotrimers via ionic interactions. Part of the GP complex (GP-C) together with glycoprotein G2 and the stable signal peptide. The GP-complex interacts with protein Z, which interacts with ribonucleocapsid; these interactions may induce virion budding. In terms of assembly, homotrimer. Interacts with the stable signal peptide. In pre-fusion state, G2 homotrimers bind G1 homotrimers via ionic interactions. Part of the GP complex (GP-C) together with glycoprotein G1 and the stable signal peptide. Acidification in the endosome triggers rearrangements, which ultimately leads to a 6 helix bundle formed by the two heptad repeat domains (HR1 and HR2) in post-fusion state. The GP-complex interacts with protein Z, which interacts with ribonucleocapsid; these interactions may induce virion budding. Specific enzymatic cleavages in vivo yield mature proteins. GP-C polyprotein is cleaved in the endoplasmic reticulum by the host protease MBTPS1. Only cleaved glycoprotein is incorporated into virions. Post-translationally, the SSP remains stably associated with the GP complex following cleavage by signal peptidase and plays crucial roles in the trafficking of GP through the secretory pathway. In terms of processing, myristoylation is necessary for GP2-mediated fusion activity.

The protein localises to the virion membrane. It localises to the host endoplasmic reticulum membrane. Its subcellular location is the host Golgi apparatus membrane. It is found in the host cell membrane. Functions as a cleaved signal peptide that is retained as the third component of the GP complex (GP-C). Helps to stabilize the spike complex in its native conformation. The SSP is required for efficient glycoprotein expression, post-translational maturation cleavage of G1 and G2, glycoprotein transport to the cell surface plasma membrane, formation of infectious virus particles, and acid pH-dependent glycoprotein-mediated cell fusion. Its function is as follows. Forms the virion spikes together with glycoprotein G2. The glycoprotein spike trimers are connected to the underlying matrix. Mediates virus attachment to host receptor alpha-dystroglycan DAG1. This attachment induces virion internalization predominantly through clathrin- and caveolin-independent endocytosis. In terms of biological role, forms the virion spikes together with glycoprotein G1. The glycoprotein spike trimers are connected to the underlying matrix. Class I viral fusion protein that directs fusion of viral and host endosomal membranes, leading to delivery of the nucleocapsid into the cytoplasm. Membrane fusion is mediated by irreversible conformational changes induced by acidification. The protein is Pre-glycoprotein polyprotein GP complex of Latino mammarenavirus (isolate Rat/Bolivia/MARU 1924/1965) (LATV).